A 455-amino-acid chain; its full sequence is Kynureninase (455 aa).

Pyridoxal 5'-phosphate-binding positions include Leu-94, Thr-95, 122 to 125 (FPSD), Asp-208, His-211, and Tyr-233. Position 234 is an N6-(pyridoxal phosphate)lysine (Lys-234). Pyridoxal 5'-phosphate contacts are provided by Trp-275 and Asn-303.

Belongs to the kynureninase family. Homodimer. Pyridoxal 5'-phosphate is required as a cofactor.

It localises to the cytoplasm. It catalyses the reaction L-kynurenine + H2O = anthranilate + L-alanine + H(+). It carries out the reaction 3-hydroxy-L-kynurenine + H2O = 3-hydroxyanthranilate + L-alanine + H(+). Its pathway is amino-acid degradation; L-kynurenine degradation; L-alanine and anthranilate from L-kynurenine: step 1/1. The protein operates within cofactor biosynthesis; NAD(+) biosynthesis; quinolinate from L-kynurenine: step 2/3. Catalyzes the cleavage of L-kynurenine (L-Kyn) and L-3-hydroxykynurenine (L-3OHKyn) into anthranilic acid (AA) and 3-hydroxyanthranilic acid (3-OHAA), respectively. The protein is Kynureninase of Vanderwaltozyma polyspora (strain ATCC 22028 / DSM 70294 / BCRC 21397 / CBS 2163 / NBRC 10782 / NRRL Y-8283 / UCD 57-17) (Kluyveromyces polysporus).